Reading from the N-terminus, the 251-residue chain is Octanoyltransferase (251 aa).

Residues 29–251 (AATPNSLWIC…GQKLSSYLAP (223 aa)) enclose the BPL/LPL catalytic domain. Substrate is bound at residue 68–75 (RGGQVTYH). The tract at residues 137-174 (ARLRPSPQPSPKGRGSSTPVLLPPLPGEGGGGGGPDPD) is disordered. Residues 184–186 (ALG) and 197–199 (GVA) each bind substrate. C215 (acyl-thioester intermediate) is an active-site residue.

This sequence belongs to the LipB family.

It localises to the cytoplasm. The enzyme catalyses octanoyl-[ACP] + L-lysyl-[protein] = N(6)-octanoyl-L-lysyl-[protein] + holo-[ACP] + H(+). It participates in protein modification; protein lipoylation via endogenous pathway; protein N(6)-(lipoyl)lysine from octanoyl-[acyl-carrier-protein]: step 1/2. In terms of biological role, catalyzes the transfer of endogenously produced octanoic acid from octanoyl-acyl-carrier-protein onto the lipoyl domains of lipoate-dependent enzymes. Lipoyl-ACP can also act as a substrate although octanoyl-ACP is likely to be the physiological substrate. This Polaromonas sp. (strain JS666 / ATCC BAA-500) protein is Octanoyltransferase.